A 450-amino-acid chain; its full sequence is Probable glycosidase CRR1 (450 aa).

Residues 1–17 form the signal peptide; that stretch reads MSKRIIQLILLSAFARA. Positions 67–347 constitute a GH16 domain; that stretch reads SPESCVPVPA…WENAPDIKAH (281 aa). The active-site Nucleophile is the glutamate 225. Glutamate 229 acts as the Proton donor in catalysis. Residues 428–450 form a disordered region; sequence AQRQQHHRRSLPHVEAPPITNTM.

This sequence belongs to the glycosyl hydrolase 16 family. CRR1 subfamily.

It localises to the spore wall. Its function is as follows. Spore specific glycosidase involved in spore wall assembly during sporulation. May be involved in copper import. The protein is Probable glycosidase CRR1 (CRR1) of Eremothecium gossypii (strain ATCC 10895 / CBS 109.51 / FGSC 9923 / NRRL Y-1056) (Yeast).